The following is a 238-amino-acid chain: Probable rhamnogalacturonate lyase B (238 aa).

An N-terminal signal peptide occupies residues 1–19 (MRLRTSLGVASACASVASA). N-linked (GlcNAc...) asparagine glycans are attached at residues asparagine 27, asparagine 110, and asparagine 143.

It belongs to the polysaccharide lyase 4 family.

Its subcellular location is the secreted. The enzyme catalyses Endotype eliminative cleavage of L-alpha-rhamnopyranosyl-(1-&gt;4)-alpha-D-galactopyranosyluronic acid bonds of rhamnogalacturonan I domains in ramified hairy regions of pectin leaving L-rhamnopyranose at the reducing end and 4-deoxy-4,5-unsaturated D-galactopyranosyluronic acid at the non-reducing end.. In terms of biological role, pectinolytic enzymes consist of four classes of enzymes: pectin lyase, polygalacturonase, pectin methylesterase and rhamnogalacturonase. Degrades the rhamnogalacturonan I (RG-I) backbone of pectin. The sequence is that of Probable rhamnogalacturonate lyase B (rglB) from Aspergillus oryzae (strain ATCC 42149 / RIB 40) (Yellow koji mold).